A 251-amino-acid polypeptide reads, in one-letter code: Auxin-responsive protein IAA29 (251 aa).

Residues 3 to 7 carry the EAR-like (transcriptional repression) motif; sequence LDLGL. The PB1 domain maps to 159-246; sequence SMYVKVKMDG…SIIRDRPCAY (88 aa).

It belongs to the Aux/IAA family. In terms of assembly, homodimers and heterodimers.

The protein localises to the nucleus. Its function is as follows. Aux/IAA proteins are short-lived transcriptional factors that function as repressors of early auxin response genes at low auxin concentrations. Repression is thought to result from the interaction with auxin response factors (ARFs), proteins that bind to the auxin-responsive promoter element (AuxRE). Formation of heterodimers with ARF proteins may alter their ability to modulate early auxin response genes expression. This Arabidopsis thaliana (Mouse-ear cress) protein is Auxin-responsive protein IAA29 (IAA29).